Here is a 536-residue protein sequence, read N- to C-terminus: CTP synthase (536 aa).

The amidoligase domain stretch occupies residues 1–267; it reads MTKFIFVTGG…DDIVIKRLEL (267 aa). Serine 13 contacts CTP. UTP is bound at residue serine 13. Position 14 to 19 (14 to 19) interacts with ATP; it reads SLGKGI. Tyrosine 54 contacts L-glutamine. Residue aspartate 71 participates in ATP binding. Mg(2+)-binding residues include aspartate 71 and glutamate 141. CTP-binding positions include 148–150, 188–193, and lysine 224; these read DIE and KTKPTQ. UTP-binding positions include 188 to 193 and lysine 224; that span reads KTKPTQ. 240–242 contacts ATP; the sequence is RDA. The Glutamine amidotransferase type-1 domain occupies 293-535; that stretch reads TIGLVGKYVS…IEASLNHQQS (243 aa). Residue glycine 355 coordinates L-glutamine. The Nucleophile; for glutamine hydrolysis role is filled by cysteine 382. Residues 383-386, glutamate 406, and arginine 463 each bind L-glutamine; that span reads LGMQ. Active-site residues include histidine 508 and glutamate 510.

This sequence belongs to the CTP synthase family. In terms of assembly, homotetramer.

The catalysed reaction is UTP + L-glutamine + ATP + H2O = CTP + L-glutamate + ADP + phosphate + 2 H(+). It carries out the reaction L-glutamine + H2O = L-glutamate + NH4(+). The enzyme catalyses UTP + NH4(+) + ATP = CTP + ADP + phosphate + 2 H(+). Its pathway is pyrimidine metabolism; CTP biosynthesis via de novo pathway; CTP from UDP: step 2/2. Allosterically activated by GTP, when glutamine is the substrate; GTP has no effect on the reaction when ammonia is the substrate. The allosteric effector GTP functions by stabilizing the protein conformation that binds the tetrahedral intermediate(s) formed during glutamine hydrolysis. Inhibited by the product CTP, via allosteric rather than competitive inhibition. Functionally, catalyzes the ATP-dependent amination of UTP to CTP with either L-glutamine or ammonia as the source of nitrogen. Regulates intracellular CTP levels through interactions with the four ribonucleotide triphosphates. The sequence is that of CTP synthase from Staphylococcus saprophyticus subsp. saprophyticus (strain ATCC 15305 / DSM 20229 / NCIMB 8711 / NCTC 7292 / S-41).